We begin with the raw amino-acid sequence, 44 residues long: AVLLKGPSGVLFEDGQKRLLPPGVEIVLLTESGAVLSNGENVQF.

2 tandem repeats follow at residues 3-20 (LLKG…KRLL) and 27-44 (VLLT…NVQF).

As to expression, calcified shell.

The protein is Cuticle protein CP459 of Cancer pagurus (Rock crab).